The primary structure comprises 412 residues: Isocitrate dehydrogenase [NADP] cytoplasmic (412 aa).

NADP(+) is bound by residues 75-77 and Arg-82; that span reads TIT. Residue Thr-77 participates in substrate binding. Residues 94–100, Arg-109, and Arg-132 contribute to the substrate site; that span reads SPNGTIR. Asp-252 contacts Mn(2+). Lys-260 is a binding site for NADP(+). Asp-275 serves as a coordination point for Mn(2+). NADP(+) contacts are provided by residues 310-315 and Asn-328; that span reads GTVTRH.

It belongs to the isocitrate and isopropylmalate dehydrogenases family. As to quaternary structure, homodimer. Requires Mg(2+) as cofactor. Mn(2+) is required as a cofactor. The N-terminus is blocked.

The protein localises to the cytoplasm. It carries out the reaction D-threo-isocitrate + NADP(+) = 2-oxoglutarate + CO2 + NADPH. With respect to regulation, by catabolite repression. May function in the production of NADPH for fatty acid and sterol synthesis. This chain is Isocitrate dehydrogenase [NADP] cytoplasmic (IDP2), found in Saccharomyces cerevisiae (strain ATCC 204508 / S288c) (Baker's yeast).